The primary structure comprises 350 residues: Histidinol-phosphate aminotransferase (350 aa).

Lys209 is modified (N6-(pyridoxal phosphate)lysine).

This sequence belongs to the class-II pyridoxal-phosphate-dependent aminotransferase family. Histidinol-phosphate aminotransferase subfamily. As to quaternary structure, homodimer. Pyridoxal 5'-phosphate serves as cofactor.

The enzyme catalyses L-histidinol phosphate + 2-oxoglutarate = 3-(imidazol-4-yl)-2-oxopropyl phosphate + L-glutamate. It functions in the pathway amino-acid biosynthesis; L-histidine biosynthesis; L-histidine from 5-phospho-alpha-D-ribose 1-diphosphate: step 7/9. The sequence is that of Histidinol-phosphate aminotransferase from Geobacter sp. (strain M21).